We begin with the raw amino-acid sequence, 273 residues long: Phosphate import ATP-binding protein PstB 1 (273 aa).

The ABC transporter domain maps to 27-268 (ISIEHLSLYY…PLKKQTEDYI (242 aa)). 59 to 66 (GPSGCGKS) serves as a coordination point for ATP.

The protein belongs to the ABC transporter superfamily. Phosphate importer (TC 3.A.1.7) family. The complex is composed of two ATP-binding proteins (PstB), two transmembrane proteins (PstC and PstA) and a solute-binding protein (PstS).

It localises to the cell inner membrane. It catalyses the reaction phosphate(out) + ATP + H2O = ADP + 2 phosphate(in) + H(+). Its function is as follows. Part of the ABC transporter complex PstSACB involved in phosphate import. Responsible for energy coupling to the transport system. This is Phosphate import ATP-binding protein PstB 1 from Vibrio cholerae serotype O1 (strain ATCC 39315 / El Tor Inaba N16961).